The primary structure comprises 765 residues: 5-methyltetrahydropteroyltriglutamate--homocysteine methyltransferase 1 (765 aa).

5-methyltetrahydropteroyltri-L-glutamate is bound by residues Lys18 and Asn116. An L-homocysteine-binding site is contributed by 437-439 (IGS). L-methionine-binding positions include 437-439 (IGS) and Glu490. Residues 521-522 (RC) and Trp567 contribute to the 5-methyltetrahydropteroyltri-L-glutamate site. L-homocysteine is bound at residue Asp605. Asp605 is a binding site for L-methionine. Residues His647, Cys649, His658, Asp662, and Glu671 each coordinate Zn(2+). The Proton donor role is filled by His701. Cys733 contributes to the Zn(2+) binding site.

It belongs to the vitamin-B12 independent methionine synthase family. The cofactor is Zn(2+). As to expression, expressed in leaves, stems, flowers, siliques and seeds.

The protein localises to the cytoplasm. It is found in the cytosol. It catalyses the reaction 5-methyltetrahydropteroyltri-L-glutamate + L-homocysteine = tetrahydropteroyltri-L-glutamate + L-methionine. It participates in amino-acid biosynthesis; L-methionine biosynthesis via de novo pathway; L-methionine from L-homocysteine (MetE route): step 1/1. In terms of biological role, catalyzes the transfer of a methyl group from 5-methyltetrahydrofolate to homocysteine resulting in methionine formation. The sequence is that of 5-methyltetrahydropteroyltriglutamate--homocysteine methyltransferase 1 (MS1) from Arabidopsis thaliana (Mouse-ear cress).